A 939-amino-acid polypeptide reads, in one-letter code: MGFNSIFKFRKTSLSLLLFAVYFIIGILYFIDKTRYKHSLPIDSEGVALLDNAWLDLQNITNKCHPYSSKENDRVHDYLLNRIADIINKTSYAEVSDDYSTNSRALFKQQDVFNASSIASRIIYFESSNILVKMEGRNPVLKSLLLSAHYDSTPSSHGVTDDGKGIVSLLALLEHFSKVQPERTLVFNFNNNEEFGLLGATIFFEHEWSKNVEYFINLEGTGIGGKAVLFRTTDTSTAKIYQNSVKNSPFGNSIYQQGFYNRYIGSETDYKVYENKGLRGWDIAFYKPRNLYHTIEDSIGHSSKPALWHMLHTSLQLSKYIAELDNISLGETQDLSPAVYFDLAGYTFVAIPSTKLFWINIALLIIMPIISIFLFSIVKKYNNEIIDSGNIWWRLPISAMSSGTIIIFTTKLIMKWNPYILSRNFLLPLIGLTFEFIILNSYILTMFENLSSSFDFKTIAINEISFLFWIVLAYQTWKLYDNNYQNTGIYPFTICYIVMATAGNIGYLFLIFKNIEIVEDEEASLVQYVSNEQSTIEGRYRDEINGRDDSSRDSNSASIPTRANDERAPLLTNSVDNINQRTILKESKLVYNYDWIIEFLLVVPFSTFLLYNSLELIMDAVNQTIQETGDLYKVYKILAIGSILISIPTLPFAYKIGCQLGKTLTFISIGCLLISMALAPFTEMNPIKFRFMQVNDKVEISGVTTHDNNKLRDMINNLPSVKRDDKKVQCQEITKFSSVCEYEGSPVHLVDNMYRDKLKLMEVIVLKDDRLSPERSPYAPITAEVEIRVQENRMCNVYFGQNKERIREVNVSIIEGNDRNSSVSLRYRVNNNRNGIDELQLHKLRFEANSYIVGIKWMPEILMSNEEEDDVLPIKVECYWGEYEESSVEVGEGEVGGGAVIEYYDKIPSYSEILEYKPVDVVIANREKGLVKLTEAMVL.

Topologically, residues 1 to 11 (MGFNSIFKFRK) are cytoplasmic. The chain crosses the membrane as a helical span at residues 12-32 (TSLSLLLFAVYFIIGILYFID). Topologically, residues 33–356 (KTRYKHSLPI…TFVAIPSTKL (324 aa)) are vacuolar. N-linked (GlcNAc...) asparagine glycans are attached at residues Asn59, Asn88, and Asn114. Positions 149 and 161 each coordinate Zn(2+). Glu193 functions as the Proton acceptor in the catalytic mechanism. Residues Glu194, Glu219, and His293 each coordinate Zn(2+). Residue Asn326 is glycosylated (N-linked (GlcNAc...) asparagine). Residues 357 to 377 (FWINIALLIIMPIISIFLFSI) form a helical membrane-spanning segment. Residues 378 to 388 (VKKYNNEIIDS) lie on the Cytoplasmic side of the membrane. A helical transmembrane segment spans residues 389-409 (GNIWWRLPISAMSSGTIIIFT). Over 410–424 (TKLIMKWNPYILSRN) the chain is Vacuolar. The helical transmembrane segment at 425–445 (FLLPLIGLTFEFIILNSYILT) threads the bilayer. The Cytoplasmic segment spans residues 446-453 (MFENLSSS). Residues 454–474 (FDFKTIAINEISFLFWIVLAY) form a helical membrane-spanning segment. The Vacuolar segment spans residues 475–491 (QTWKLYDNNYQNTGIYP). Residues 492–512 (FTICYIVMATAGNIGYLFLIF) traverse the membrane as a helical segment. Residues 513-588 (KNIEIVEDEE…NQRTILKESK (76 aa)) lie on the Cytoplasmic side of the membrane. Residues 540-552 (YRDEINGRDDSSR) show a composition bias toward basic and acidic residues. A disordered region spans residues 540–561 (YRDEINGRDDSSRDSNSASIPT). The chain crosses the membrane as a helical span at residues 589–609 (LVYNYDWIIEFLLVVPFSTFL). At 610–636 (LYNSLELIMDAVNQTIQETGDLYKVYK) the chain is on the vacuolar side. N-linked (GlcNAc...) asparagine glycosylation occurs at Asn622. A helical transmembrane segment spans residues 637 to 657 (ILAIGSILISIPTLPFAYKIG). Over 658–663 (CQLGKT) the chain is Cytoplasmic. A helical transmembrane segment spans residues 664–684 (LTFISIGCLLISMALAPFTEM). Over 685–939 (NPIKFRFMQV…LVKLTEAMVL (255 aa)) the chain is Vacuolar. N-linked (GlcNAc...) asparagine glycans are attached at residues Asn810 and Asn820.

It belongs to the peptidase M28 family. Zn(2+) is required as a cofactor.

The protein resides in the vacuole membrane. In terms of biological role, may be involved in vacuolar sorting and osmoregulation. This chain is Vacuolar membrane protease, found in Vanderwaltozyma polyspora (strain ATCC 22028 / DSM 70294 / BCRC 21397 / CBS 2163 / NBRC 10782 / NRRL Y-8283 / UCD 57-17) (Kluyveromyces polysporus).